The sequence spans 109 residues: Flagellar hook-basal body complex protein FliE (109 aa).

This sequence belongs to the FliE family.

It localises to the bacterial flagellum basal body. The protein is Flagellar hook-basal body complex protein FliE of Pseudomonas aeruginosa (strain LESB58).